A 340-amino-acid chain; its full sequence is CRISPR-associated protein Cas7 (340 aa).

Component of the Cascade-like complex (Cascade I-B), composed of Cas5, Cas6, Cas7 and crRNA.

Its subcellular location is the cytoplasm. Its function is as follows. CRISPR (clustered regularly interspaced short palindromic repeat) is an adaptive immune system that provides protection against mobile genetic elements (viruses, transposable elements and conjugative plasmids). CRISPR clusters contain sequences complementary to antecedent mobile elements and target invading nucleic acids. CRISPR clusters are transcribed and processed into CRISPR RNA (crRNA). Plasmid targeted by CRISPR locus P1 transform wild-type cells very poorly. This protein helps process or stabilize pre-crRNA into individual crRNA units, in vivo Cas6 and Cas7 are also required for optimal crRNA processing and/or stability. This chain is CRISPR-associated protein Cas7, found in Haloferax volcanii (strain ATCC 29605 / DSM 3757 / JCM 8879 / NBRC 14742 / NCIMB 2012 / VKM B-1768 / DS2) (Halobacterium volcanii).